The primary structure comprises 163 residues: Lipoprotein signal peptidase (163 aa).

4 helical membrane passes run 5–25, 37–57, 67–87, and 91–111; these read VLTF…TKSL, IIPG…FGML, LMLV…VFKS, and LSNL…GNLY. Catalysis depends on residues Asp121 and Asp139. The helical transmembrane segment at 132 to 152 threads the bilayer; it reads WPAFNVADASITIGIALFIGY.

It belongs to the peptidase A8 family.

It is found in the cell inner membrane. It catalyses the reaction Release of signal peptides from bacterial membrane prolipoproteins. Hydrolyzes -Xaa-Yaa-Zaa-|-(S,diacylglyceryl)Cys-, in which Xaa is hydrophobic (preferably Leu), and Yaa (Ala or Ser) and Zaa (Gly or Ala) have small, neutral side chains.. The protein operates within protein modification; lipoprotein biosynthesis (signal peptide cleavage). Its function is as follows. This protein specifically catalyzes the removal of signal peptides from prolipoproteins. The polypeptide is Lipoprotein signal peptidase (Sulfurihydrogenibium sp. (strain YO3AOP1)).